The chain runs to 322 residues: Endochitinase CH25 (322 aa).

The first 20 residues, 1–20, serve as a signal peptide directing secretion; that stretch reads MKSCLLLFLIFSFLLSFSLA. The Chitin-binding type-1 domain maps to 21–62; that stretch reads EQCGRQAGGALCPNGLCCSEFGWCGDTEAYCKQPGCQSQCGG. 7 disulfides stabilise this stretch: cysteine 23–cysteine 38, cysteine 32–cysteine 44, cysteine 37–cysteine 51, cysteine 56–cysteine 60, cysteine 92–cysteine 154, cysteine 166–cysteine 174, and cysteine 273–cysteine 305. The active-site Proton donor is the glutamate 136.

It belongs to the glycosyl hydrolase 19 family. Chitinase class I subfamily. As to expression, high expression in roots, moderate in floral tissues and low in stems and leaves.

It carries out the reaction Random endo-hydrolysis of N-acetyl-beta-D-glucosaminide (1-&gt;4)-beta-linkages in chitin and chitodextrins.. The protein is Endochitinase CH25 of Brassica napus (Rape).